The following is a 126-amino-acid chain: Glycine cleavage system H protein (126 aa).

The Lipoyl-binding domain maps to 23-104 (TLTVGITDHA…PYDNWLFKIK (82 aa)). Lys-64 carries the N6-lipoyllysine modification.

It belongs to the GcvH family. The glycine cleavage system is composed of four proteins: P, T, L and H. Requires (R)-lipoate as cofactor.

In terms of biological role, the glycine cleavage system catalyzes the degradation of glycine. The H protein shuttles the methylamine group of glycine from the P protein to the T protein. This Paraburkholderia phymatum (strain DSM 17167 / CIP 108236 / LMG 21445 / STM815) (Burkholderia phymatum) protein is Glycine cleavage system H protein.